The sequence spans 235 residues: Aspartate/glutamate leucyltransferase (235 aa).

The protein belongs to the R-transferase family. Bpt subfamily.

It is found in the cytoplasm. The enzyme catalyses N-terminal L-glutamyl-[protein] + L-leucyl-tRNA(Leu) = N-terminal L-leucyl-L-glutamyl-[protein] + tRNA(Leu) + H(+). It catalyses the reaction N-terminal L-aspartyl-[protein] + L-leucyl-tRNA(Leu) = N-terminal L-leucyl-L-aspartyl-[protein] + tRNA(Leu) + H(+). Functions in the N-end rule pathway of protein degradation where it conjugates Leu from its aminoacyl-tRNA to the N-termini of proteins containing an N-terminal aspartate or glutamate. This is Aspartate/glutamate leucyltransferase from Pseudomonas fluorescens (strain ATCC BAA-477 / NRRL B-23932 / Pf-5).